Here is a 644-residue protein sequence, read N- to C-terminus: MRLSHVLLGTAAAAGVLASPTPNDYVVHERRAVLPRSWTEEKRLDKASILPMRIGLTQSNLDRGHDLLMEISDPRSSRYGQHLSVEEVHSLFAPSQETVDRVRAWLESEGIAGDRISQSSNEQFLQFDASAAEVERLLGTEYYLYTHQGSGKSHIACREYHVPHSLQRHIDYITPGIKLLEVEGVKKARSIEKRSFRSPLPPILERLTLPLSELLGNTLLCDVAITPLCISALYNITRGSKATKGNELGIFEDLGDVYSQEDLNLFFSTFAQQIPQGTHPILKAVDGAQAPTSVTNAGPESDLDFQISYPIIWPQNSILFQTDDPNYTANYNFSGFLNTFLDAIDGSYCSEISPLDPPYPNPADGGYKGQLQCGVYQPPKVLSISYGGAEADLPIAYQRRQCAEWMKLGLQGVSVVVASGDSGVEGRNGDPTPTECLGTEGKVFAPDFPATCPYLTTVGGTYLPLGADPRKDEEVAVTSFPSGGGFSNIYERADYQQQAVEDYFSRADPGYPFYESVDNSSFAENGGIYNRIGRAYPDVAAIADNVVIFNKGMPTLIGGTSAAAPVFAAILTRINEERLAVGKSTVGFVNPVLYAHPEVFNDITQGSNPGCGMQGFSAATGWDPVTGLGTPNYPALLDLFMSLP.

Residues 1-18 form the signal peptide; that stretch reads MRLSHVLLGTAAAAGVLA. Positions 19 to 196 are cleaved as a propeptide — removed in mature form; sequence SPTPNDYVVH…KARSIEKRSF (178 aa). Positions 224-643 constitute a Peptidase S53 domain; that stretch reads AITPLCISAL…PALLDLFMSL (420 aa). The N-linked (GlcNAc...) asparagine glycan is linked to asparagine 235. Catalysis depends on charge relay system residues glutamate 300 and aspartate 304. 3 N-linked (GlcNAc...) asparagine glycosylation sites follow: asparagine 326, asparagine 332, and asparagine 519. The active-site Charge relay system is the serine 561. Positions 602, 603, 621, and 623 each coordinate Ca(2+).

Requires Ca(2+) as cofactor. In terms of processing, N-glycosylated.

Its subcellular location is the secreted. The protein resides in the extracellular space. It catalyses the reaction Release of an N-terminal tripeptide from a polypeptide.. In terms of biological role, secreted tripeptidyl-peptidase which degrades proteins at acidic pHs and is involved in virulence. The chain is Tripeptidyl-peptidase sed1 (sed1) from Aspergillus fumigatus (strain ATCC MYA-4609 / CBS 101355 / FGSC A1100 / Af293) (Neosartorya fumigata).